Consider the following 857-residue polypeptide: Dimethylglycine dehydrogenase, mitochondrial (857 aa).

A mitochondrion-targeting transit peptide spans 1 to 43 (MLRLGALRLRGLALRSSQGRPSSAGLREGQESPPSPPEWKDRA). The interval 15-39 (RSSQGRPSSAGLREGQESPPSPPEW) is disordered. FAD-binding positions include 52 to 53 (CV), 73 to 74 (EK), and 80 to 88 (GSTWHAAGL). Position 84 is a tele-8alpha-FAD histidine (histidine 84). Lysine 107 carries the post-translational modification N6-acetyllysine. At lysine 141 the chain carries N6-acetyllysine; alternate. Residue lysine 141 is modified to N6-succinyllysine; alternate. Residue lysine 161 is modified to N6-acetyllysine. Residue valine 212 participates in FAD binding. An N6-acetyllysine modification is found at lysine 216. Position 244 (tryptophan 244) interacts with FAD. Residues lysine 310 and lysine 312 each carry the N6-succinyllysine modification. An N6-acetyllysine mark is found at lysine 328 and lysine 353. 390–395 (FGYGII) contacts FAD. N6-acetyllysine; alternate is present on residues lysine 427, lysine 469, and lysine 516. N6-succinyllysine; alternate occurs at positions 427, 469, and 516. A (6S)-5,6,7,8-tetrahydrofolate-binding site is contributed by 573–575 (ELT). Lysine 648 carries the N6-acetyllysine; alternate modification. Residue lysine 648 is modified to N6-succinyllysine; alternate. Residues tyrosine 669, 676–678 (ELY), and tyrosine 737 contribute to the (6S)-5,6,7,8-tetrahydrofolate site. Lysine 757 carries the post-translational modification N6-acetyllysine. Lysine 786 bears the N6-acetyllysine; alternate mark. Lysine 786 bears the N6-succinyllysine; alternate mark. Residue lysine 788 is modified to N6-succinyllysine.

It belongs to the GcvT family. FAD serves as cofactor.

Its subcellular location is the mitochondrion. The enzyme catalyses (6S)-5,6,7,8-tetrahydrofolyl-(gamma-L-Glu)(n) + N,N-dimethylglycine + oxidized [electron-transfer flavoprotein] + H(+) = (6R)-5,10-methylenetetrahydrofolyl-(gamma-L-Glu)(n) + sarcosine + reduced [electron-transfer flavoprotein]. It participates in amine and polyamine degradation; betaine degradation; sarcosine from betaine: step 2/2. Functionally, catalyzes the demethylation of N,N-dimethylglycine to sarcosine. Also has activity with sarcosine in vitro. The protein is Dimethylglycine dehydrogenase, mitochondrial (Dmgdh) of Rattus norvegicus (Rat).